The sequence spans 82 residues: Small ribosomal subunit protein bS20 (82 aa).

This sequence belongs to the bacterial ribosomal protein bS20 family.

Functionally, binds directly to 16S ribosomal RNA. This is Small ribosomal subunit protein bS20 from Streptococcus suis (strain 98HAH33).